The chain runs to 130 residues: uncharacterized protein (130 aa).

Residues 1-26 form the signal peptide; the sequence is MKFIYKLLFILSIVLFLFNNIITING. Asparagine 88 carries N-linked (GlcNAc...) asparagine glycosylation.

It is found in the secreted. This is an uncharacterized protein from Dictyostelium discoideum (Social amoeba).